The primary structure comprises 138 residues: uncharacterized protein (138 aa).

The tract at residues 1–73 (MCSAGQLLGG…NHTGEPVGDD (73 aa)) is disordered. Residues 7–18 (LLGGGGGGGGSG) show a composition bias toward gly residues. Residues 19–29 (GERDEDRDALA) show a composition bias toward basic and acidic residues. The segment covering 30–43 (ERAAAGTEQESGAS) has biased composition (low complexity). Residues 106–126 (VIVIFFWVMLWFLGLPAFGLV) form a helical membrane-spanning segment.

The protein belongs to the FAM241 family.

The protein localises to the membrane. This is an uncharacterized protein from Bos taurus (Bovine).